The primary structure comprises 489 residues: Rhamnulokinase (489 aa).

Position 13-17 (Ala13–Arg17) interacts with ATP. Cys68 and Cys222 are oxidised to a cystine. Residues Gly83 and His236–Thr238 contribute to the substrate site. Asp237 acts as the Proton acceptor in catalysis. ATP is bound at residue Thr259. Asn296 serves as a coordination point for substrate. Gln304 contributes to the ATP binding site. Cys353 and Cys370 are disulfide-bonded. Residue Gly402 coordinates ATP. Cys413 and Cys417 are disulfide-bonded.

It belongs to the rhamnulokinase family. As to quaternary structure, monomer. It depends on Mg(2+) as a cofactor.

The enzyme catalyses L-rhamnulose + ATP = L-rhamnulose 1-phosphate + ADP + H(+). It functions in the pathway carbohydrate degradation; L-rhamnose degradation; glycerone phosphate from L-rhamnose: step 2/3. Functionally, involved in the catabolism of L-rhamnose (6-deoxy-L-mannose). Catalyzes the transfer of the gamma-phosphate group from ATP to the 1-hydroxyl group of L-rhamnulose to yield L-rhamnulose 1-phosphate. This is Rhamnulokinase from Escherichia fergusonii (strain ATCC 35469 / DSM 13698 / CCUG 18766 / IAM 14443 / JCM 21226 / LMG 7866 / NBRC 102419 / NCTC 12128 / CDC 0568-73).